Reading from the N-terminus, the 253-residue chain is 5'-nucleotidase SurE (253 aa).

Residues Asp-8, Asp-9, Ser-39, and Asn-96 each coordinate a divalent metal cation.

The protein belongs to the SurE nucleotidase family. Requires a divalent metal cation as cofactor.

The protein resides in the cytoplasm. The enzyme catalyses a ribonucleoside 5'-phosphate + H2O = a ribonucleoside + phosphate. Its function is as follows. Nucleotidase that shows phosphatase activity on nucleoside 5'-monophosphates. The protein is 5'-nucleotidase SurE of Rhodopirellula baltica (strain DSM 10527 / NCIMB 13988 / SH1).